Reading from the N-terminus, the 213-residue chain is Thiamine-phosphate synthase (213 aa).

4-amino-2-methyl-5-(diphosphooxymethyl)pyrimidine is bound by residues 39 to 43 (QYRDK) and D71. Mg(2+)-binding residues include D72 and D91. S108 is a binding site for 4-amino-2-methyl-5-(diphosphooxymethyl)pyrimidine. 135 to 137 (TDT) lines the 2-[(2R,5Z)-2-carboxy-4-methylthiazol-5(2H)-ylidene]ethyl phosphate pocket. 4-amino-2-methyl-5-(diphosphooxymethyl)pyrimidine is bound at residue K138. Residues G165 and 185–186 (VS) contribute to the 2-[(2R,5Z)-2-carboxy-4-methylthiazol-5(2H)-ylidene]ethyl phosphate site.

This sequence belongs to the thiamine-phosphate synthase family. Requires Mg(2+) as cofactor.

The enzyme catalyses 2-[(2R,5Z)-2-carboxy-4-methylthiazol-5(2H)-ylidene]ethyl phosphate + 4-amino-2-methyl-5-(diphosphooxymethyl)pyrimidine + 2 H(+) = thiamine phosphate + CO2 + diphosphate. It carries out the reaction 2-(2-carboxy-4-methylthiazol-5-yl)ethyl phosphate + 4-amino-2-methyl-5-(diphosphooxymethyl)pyrimidine + 2 H(+) = thiamine phosphate + CO2 + diphosphate. It catalyses the reaction 4-methyl-5-(2-phosphooxyethyl)-thiazole + 4-amino-2-methyl-5-(diphosphooxymethyl)pyrimidine + H(+) = thiamine phosphate + diphosphate. It functions in the pathway cofactor biosynthesis; thiamine diphosphate biosynthesis; thiamine phosphate from 4-amino-2-methyl-5-diphosphomethylpyrimidine and 4-methyl-5-(2-phosphoethyl)-thiazole: step 1/1. Its function is as follows. Condenses 4-methyl-5-(beta-hydroxyethyl)thiazole monophosphate (THZ-P) and 2-methyl-4-amino-5-hydroxymethyl pyrimidine pyrophosphate (HMP-PP) to form thiamine monophosphate (TMP). The polypeptide is Thiamine-phosphate synthase (Thermoplasma acidophilum (strain ATCC 25905 / DSM 1728 / JCM 9062 / NBRC 15155 / AMRC-C165)).